A 412-amino-acid polypeptide reads, in one-letter code: Burnettramic acids biosynthesis cluster protein E (412 aa).

Disordered stretches follow at residues 1–66 (MAIA…KKIR), 308–342 (RNPTSPLAAPPRRGFTSKLADPNDDTNKSPISLAT), and 386–412 (SRAESIMATEATTEPSVQSDDAEAAKG). The segment covering 36-58 (EDEQWALDELQDELCQEEPSDSE) has biased composition (acidic residues). Over residues 395–404 (EATTEPSVQS) the composition is skewed to polar residues.

Its pathway is mycotoxin biosynthesis. Part of the gene cluster that mediates the biosynthesis of burnettramic acids, an unusual class of bolaamphiphilic pyrrolizidinediones that display potent antibacterial, antifungal, and cytotoxic activities. The first step of the biosynthesis of burnettramic acids is the hydroxylation of proline by the proline hydroxylase buaE to generate 4-hydroxyproline. The PKS-NRPS buaA and trans-enoyl reductase buaC construct the highly reduced polyketide chain, and the condensation (C) domain of buaA then catalyzes the amide bond formation with the activated 4-hydroxyproline. This is followed by the R domain releasing the nascent polyketide-peptide directly via a Dieckmann condensation to afford a tetramic acid fused to the hydroxyproline, generating the bicyclic pyrrolidinedione moiety. The cytochrome P450 monooxygenases buaD and buaG are likely responsible for the multiple hydroxylations on the polyketide chain and its terminus, although in the heterologous context, buaD does not appear to be required. Therefore, while buaG may be a multifunctional cytochrome P450 monooxygenase, it cannot be ruled out that the two secondary alcohols on the polyketide chain could have an acetate origin. Finally, the glycosyltransferase buaB transfers beta-D-mannose to the aglycone burnettramic acid A to form burnettramic acid A. Burnettramic acid B is a minor cis-pyrrolizidine epimer of burnettramic acid A and it is likely that small amounts of it form naturally in acidic environments. The role of the uncharacterized protein buaF in the biosynthesis of burnettramic acids has still to be determined. This is Burnettramic acids biosynthesis cluster protein E from Petromyces alliaceus (Aspergillus alliaceus).